A 294-amino-acid chain; its full sequence is Acetylglutamate kinase (294 aa).

Substrate contacts are provided by residues 67–68, R89, and N191; that span reads GG.

Belongs to the acetylglutamate kinase family. ArgB subfamily.

It localises to the cytoplasm. The enzyme catalyses N-acetyl-L-glutamate + ATP = N-acetyl-L-glutamyl 5-phosphate + ADP. The protein operates within amino-acid biosynthesis; L-arginine biosynthesis; N(2)-acetyl-L-ornithine from L-glutamate: step 2/4. Its function is as follows. Catalyzes the ATP-dependent phosphorylation of N-acetyl-L-glutamate. In Methylobacillus flagellatus (strain ATCC 51484 / DSM 6875 / VKM B-1610 / KT), this protein is Acetylglutamate kinase.